A 367-amino-acid polypeptide reads, in one-letter code: DNA replication and repair protein RecF (367 aa).

ATP is bound at residue 30–37 (GANGSGKT).

It belongs to the RecF family.

The protein localises to the cytoplasm. Its function is as follows. The RecF protein is involved in DNA metabolism; it is required for DNA replication and normal SOS inducibility. RecF binds preferentially to single-stranded, linear DNA. It also seems to bind ATP. The sequence is that of DNA replication and repair protein RecF from Pseudomonas putida (strain ATCC 47054 / DSM 6125 / CFBP 8728 / NCIMB 11950 / KT2440).